Here is a 75-residue protein sequence, read N- to C-terminus: Dermaseptin-related peptide (75 aa).

Residues 1–22 (MAFLNKSLLLVLFLGLVSLSIC) form the signal peptide. Residues 23 to 43 (EEERRENEDEEEQEDDEQSEM) constitute a propeptide that is removed on maturation. The disordered stretch occupies residues 24 to 44 (EERRENEDEEEQEDDEQSEMR). The segment covering 30–40 (EDEEEQEDDEQ) has biased composition (acidic residues). Q72 carries the glutamine amide modification. Positions 74-75 (EQ) are excised as a propeptide.

In terms of tissue distribution, expressed by the skin glands.

It localises to the secreted. Its function is as follows. Has antibacterial activity against Gram-positive bacterium M.luteus NCT C2665 but not against Gram-negative bacterium E.coli K12D31. The chain is Dermaseptin-related peptide from Agalychnis callidryas (Red-eyed tree frog).